A 108-amino-acid polypeptide reads, in one-letter code: Ig kappa chain V-V region MOPC 173 (108 aa).

Positions 1–23 are framework-1; the sequence is DIQMTQTTSSLSASLGDRVTISC. An intrachain disulfide couples Cys23 to Cys88. A complementarity-determining-1 region spans residues 24–34; the sequence is SASQSIGNYLB. Positions 35–49 are framework-2; that stretch reads WYQQKPDGTVKLLIY. The tract at residues 50–56 is complementarity-determining-2; sequence YTSSLHS. The segment at 57-88 is framework-3; it reads GVPSRFSGSGSGTDYSLTISBLZPZBIATYYC. A complementarity-determining-3 region spans residues 89 to 97; that stretch reads QQYSKLPRT. The segment at 98 to 108 is framework-4; sequence FGGGTKLEIKR.

In Mus musculus (Mouse), this protein is Ig kappa chain V-V region MOPC 173.